Here is a 456-residue protein sequence, read N- to C-terminus: MDTEPLLSPLSPSPHLLHPLPEHAEVSTFSPPLSPCPSPASSYKERIIFGAHPPPPPPPPPPPPPPPRGRRYYRRVSGDDLDVPSCSSSPSPPSDEENPPPNPPSLFDFIGGRTNLHRSRTAPAMAPLNAAAIAAAAASGDSRNPPPPPRRPAIVLHAFLFLLAYLAMGVTFYAALPGNFTSSAGPTHPVADALYFCIVTLCTIGYGDITPATPAAKLFSISFVLIGFGFVDILLSGMVSYVLDLQEHLLITALKNPRSVRKHRHNYIFDLKKGRMRVRMKVALALTVVAICVGVGAAVLKRVENLGWLDAVYLAVMSVTTVGYGDHAFRTLAGRLFASAWLLVSTLAVARAFLYLAEMRIDKRHRAMANWVLSRDMTVSEFLAADIDNNGYVTKSEFVVYKLKEMGKISEKDIMMICDQFQRMDSGNCGKITLSDLLESHQLVTDLNEKKKGKKS.

The span at 1-19 (MDTEPLLSPLSPSPHLLHP) shows a compositional bias: low complexity. The interval 1-112 (MDTEPLLSPL…PPSLFDFIGG (112 aa)) is disordered. At 1-152 (MDTEPLLSPL…RNPPPPPRRP (152 aa)) the chain is on the cytoplasmic side. Residues 52-67 (HPPPPPPPPPPPPPPP) show a composition bias toward pro residues. The helical transmembrane segment at 153–173 (AIVLHAFLFLLAYLAMGVTFY) threads the bilayer. Positions 192 to 211 (DALYFCIVTLCTIGYGDITP) form an intramembrane region, pore-forming. A helical transmembrane segment spans residues 223–243 (FVLIGFGFVDILLSGMVSYVL). The Cytoplasmic portion of the chain corresponds to 244–279 (DLQEHLLITALKNPRSVRKHRHNYIFDLKKGRMRVR). The helical transmembrane segment at 280–300 (MKVALALTVVAICVGVGAAVL) threads the bilayer. The pore-forming intramembrane region spans 310–329 (DAVYLAVMSVTTVGYGDHAF). Residues 336 to 356 (LFASAWLLVSTLAVARAFLYL) traverse the membrane as a helical segment. At 357–456 (AEMRIDKRHR…LNEKKKGKKS (100 aa)) the chain is on the cytoplasmic side. EF-hand domains lie at 373–408 (LSRD…EMGK) and 412–447 (KDIM…VTDL). Residues aspartate 386, aspartate 388, asparagine 390, tyrosine 392, glutamate 397, aspartate 425, lysine 431, and aspartate 436 each coordinate Ca(2+).

The protein belongs to the two pore domain potassium channel (TC 1.A.1.7) family. As to quaternary structure, homodimer.

It is found in the membrane. Inward-rectifying potassium channel. The chain is Two pore potassium channel c (TPKC) from Oryza sativa subsp. japonica (Rice).